The following is a 333-amino-acid chain: ADP-L-glycero-D-manno-heptose-6-epimerase (333 aa).

Residues 11–12 (FI), 32–33 (DN), K39, K54, 76–80 (QGACS), and N93 each bind NADP(+). Residue Y140 is the Proton acceptor of the active site. K144 contributes to the NADP(+) binding site. N170 lines the substrate pocket. The NADP(+) site is built by V171 and K179. The active-site Proton acceptor is the K179. Residues R181, H188, 202 to 205 (FGGW), R215, and Y294 each bind substrate.

It belongs to the NAD(P)-dependent epimerase/dehydratase family. HldD subfamily. In terms of assembly, homopentamer. The cofactor is NADP(+).

It carries out the reaction ADP-D-glycero-beta-D-manno-heptose = ADP-L-glycero-beta-D-manno-heptose. It participates in nucleotide-sugar biosynthesis; ADP-L-glycero-beta-D-manno-heptose biosynthesis; ADP-L-glycero-beta-D-manno-heptose from D-glycero-beta-D-manno-heptose 7-phosphate: step 4/4. Its pathway is bacterial outer membrane biogenesis; LPS core biosynthesis. Its function is as follows. Catalyzes the interconversion between ADP-D-glycero-beta-D-manno-heptose and ADP-L-glycero-beta-D-manno-heptose via an epimerization at carbon 6 of the heptose. The protein is ADP-L-glycero-D-manno-heptose-6-epimerase of Chromobacterium violaceum (strain ATCC 12472 / DSM 30191 / JCM 1249 / CCUG 213 / NBRC 12614 / NCIMB 9131 / NCTC 9757 / MK).